Consider the following 379-residue polypeptide: 1-deoxy-D-xylulose 5-phosphate reductoisomerase (379 aa).

NADPH is bound by residues threonine 10, glycine 11, serine 12, isoleucine 13, asparagine 39, and asparagine 121. Lysine 122 is a binding site for 1-deoxy-D-xylulose 5-phosphate. NADPH is bound at residue glutamate 123. Residue aspartate 147 coordinates Mn(2+). 4 residues coordinate 1-deoxy-D-xylulose 5-phosphate: serine 148, glutamate 149, serine 173, and histidine 196. Glutamate 149 is a binding site for Mn(2+). Glycine 202 lines the NADPH pocket. 4 residues coordinate 1-deoxy-D-xylulose 5-phosphate: serine 209, asparagine 214, lysine 215, and glutamate 218. Residue glutamate 218 participates in Mn(2+) binding.

This sequence belongs to the DXR family. The cofactor is Mg(2+). Requires Mn(2+) as cofactor.

The enzyme catalyses 2-C-methyl-D-erythritol 4-phosphate + NADP(+) = 1-deoxy-D-xylulose 5-phosphate + NADPH + H(+). It functions in the pathway isoprenoid biosynthesis; isopentenyl diphosphate biosynthesis via DXP pathway; isopentenyl diphosphate from 1-deoxy-D-xylulose 5-phosphate: step 1/6. Functionally, catalyzes the NADPH-dependent rearrangement and reduction of 1-deoxy-D-xylulose-5-phosphate (DXP) to 2-C-methyl-D-erythritol 4-phosphate (MEP). This Chlamydia pneumoniae (Chlamydophila pneumoniae) protein is 1-deoxy-D-xylulose 5-phosphate reductoisomerase.